The chain runs to 83 residues: Small ribosomal subunit protein bS16 (83 aa).

It belongs to the bacterial ribosomal protein bS16 family.

The polypeptide is Small ribosomal subunit protein bS16 (Pseudoalteromonas atlantica (strain T6c / ATCC BAA-1087)).